A 507-amino-acid chain; its full sequence is Glutamyl-tRNA(Gln) amidotransferase subunit A, mitochondrial (507 aa).

Catalysis depends on charge relay system residues Lys-79 and Ser-160. The active-site Acyl-ester intermediate is Ser-184.

Belongs to the amidase family. GatA subfamily. In terms of assembly, subunit of the heterotrimeric GatCAB amidotransferase (AdT) complex, composed of A, B and C subunits.

The protein resides in the mitochondrion. It carries out the reaction L-glutamyl-tRNA(Gln) + L-glutamine + ATP + H2O = L-glutaminyl-tRNA(Gln) + L-glutamate + ADP + phosphate + H(+). Allows the formation of correctly charged Gln-tRNA(Gln) through the transamidation of misacylated Glu-tRNA(Gln) in the mitochondria. The reaction takes place in the presence of glutamine and ATP through an activated gamma-phospho-Glu-tRNA(Gln). This chain is Glutamyl-tRNA(Gln) amidotransferase subunit A, mitochondrial, found in Drosophila pseudoobscura pseudoobscura (Fruit fly).